The sequence spans 290 residues: Ribosomal RNA small subunit methyltransferase A (290 aa).

6 residues coordinate S-adenosyl-L-methionine: asparagine 27, leucine 29, glycine 54, glutamate 75, aspartate 100, and asparagine 125.

This sequence belongs to the class I-like SAM-binding methyltransferase superfamily. rRNA adenine N(6)-methyltransferase family. RsmA subfamily.

The protein resides in the cytoplasm. The catalysed reaction is adenosine(1518)/adenosine(1519) in 16S rRNA + 4 S-adenosyl-L-methionine = N(6)-dimethyladenosine(1518)/N(6)-dimethyladenosine(1519) in 16S rRNA + 4 S-adenosyl-L-homocysteine + 4 H(+). In terms of biological role, specifically dimethylates two adjacent adenosines (A1518 and A1519) in the loop of a conserved hairpin near the 3'-end of 16S rRNA in the 30S particle. May play a critical role in biogenesis of 30S subunits. This Streptococcus agalactiae serotype Ia (strain ATCC 27591 / A909 / CDC SS700) protein is Ribosomal RNA small subunit methyltransferase A.